We begin with the raw amino-acid sequence, 164 residues long: UPF0561 protein C2orf68 homolog (164 aa).

Composition is skewed to basic and acidic residues over residues 1-13 (MEVI…ESVK) and 35-49 (IARD…QAKE). A disordered region spans residues 1–98 (MEVIRDGEGE…WNESSSGTEM (98 aa)). The segment covering 50–64 (KQRRRHTNTPRRPRR) has biased composition (basic residues).

This sequence belongs to the UPF0561 family.

The polypeptide is UPF0561 protein C2orf68 homolog (Danio rerio (Zebrafish)).